The primary structure comprises 539 residues: MTKYIFVTGGVVSSLGKGITASSLGRLLKNRGLKVTMQKFDPYINIDPGTMNPYQHGEVYVTDDGTEADLDLGHYERIVDVRTSKYSNVTTGKIYQEVLEKERRGDYHGATVQVIPHITNMIKKKIMRAALTTDSDVIISEIGGTVGDIESTPFMEAIRQMRREVGEDNVMYIHCTLVPLLHAAHEMKTKPTQHSVAELRSIGIQPNMLVLRAEQPIDQEHKDKISDFTDVPVDRIIESIDAPSLFDVPLEFQKQGMDQKVCDFLHLESPKPEADMEAWKKLDERAKNLEHKTKITLVGKYVELEDAYISVTDALQHAGYLYNTKIEVDKVQAEDITEDNIAEIMKDSDGLIVPGGFGTRGLEGMITAIKYARENDIPFLGICLGMQMASVEFARNVLNLEDANSAEAEPNCKNNIIDIMADKRDEENIGGTLRLGLYPATLKEGTKTREAYDNQDVIQERHRHRFEFNNKYREAFEKAGMVFSGVSPDNRLVEIIELPKKKFFIAAQYHPEFLSRPQRPEGLFKSFIGAASGLPAQKF.

Positions 1–267 are amidoligase domain; it reads MTKYIFVTGG…DQKVCDFLHL (267 aa). Serine 13 is a CTP binding site. Serine 13 is a binding site for UTP. Residue 14–19 participates in ATP binding; sequence SLGKGI. Residue tyrosine 54 coordinates L-glutamine. Aspartate 71 lines the ATP pocket. Positions 71 and 141 each coordinate Mg(2+). CTP-binding positions include 148–150, 188–193, and lysine 224; these read DIE and KTKPTQ. Residues 188-193 and lysine 224 each bind UTP; that span reads KTKPTQ. The Glutamine amidotransferase type-1 domain occupies 294-537; it reads KITLVGKYVE…IGAASGLPAQ (244 aa). Residue glycine 356 coordinates L-glutamine. Cysteine 383 functions as the Nucleophile; for glutamine hydrolysis in the catalytic mechanism. Residues 384–387, glutamate 407, and arginine 465 contribute to the L-glutamine site; that span reads LGMQ. Catalysis depends on residues histidine 510 and glutamate 512.

Belongs to the CTP synthase family. In terms of assembly, homotetramer.

The enzyme catalyses UTP + L-glutamine + ATP + H2O = CTP + L-glutamate + ADP + phosphate + 2 H(+). The catalysed reaction is L-glutamine + H2O = L-glutamate + NH4(+). It carries out the reaction UTP + NH4(+) + ATP = CTP + ADP + phosphate + 2 H(+). It functions in the pathway pyrimidine metabolism; CTP biosynthesis via de novo pathway; CTP from UDP: step 2/2. Its activity is regulated as follows. Allosterically activated by GTP, when glutamine is the substrate; GTP has no effect on the reaction when ammonia is the substrate. The allosteric effector GTP functions by stabilizing the protein conformation that binds the tetrahedral intermediate(s) formed during glutamine hydrolysis. Inhibited by the product CTP, via allosteric rather than competitive inhibition. In terms of biological role, catalyzes the ATP-dependent amination of UTP to CTP with either L-glutamine or ammonia as the source of nitrogen. Regulates intracellular CTP levels through interactions with the four ribonucleotide triphosphates. This is CTP synthase from Lactobacillus acidophilus (strain ATCC 700396 / NCK56 / N2 / NCFM).